A 765-amino-acid polypeptide reads, in one-letter code: Probable dipeptidyl peptidase 4 (765 aa).

The signal sequence occupies residues 1–14; it reads MKWSILLLVGCAAA. 8 N-linked (GlcNAc...) asparagine glycosylation sites follow: N35, N78, N101, N110, N169, N218, N465, and N490. The active-site Charge relay system is the S613. N-linked (GlcNAc...) asparagine glycosylation occurs at N665. Catalysis depends on charge relay system residues D690 and H725.

It belongs to the peptidase S9B family.

The protein resides in the secreted. It catalyses the reaction Release of an N-terminal dipeptide, Xaa-Yaa-|-Zaa-, from a polypeptide, preferentially when Yaa is Pro, provided Zaa is neither Pro nor hydroxyproline.. Extracellular dipeptidyl-peptidase which removes N-terminal dipeptides sequentially from polypeptides having unsubstituted N-termini provided that the penultimate residue is proline. Contributes to pathogenicity. In Aspergillus fumigatus (strain ATCC MYA-4609 / CBS 101355 / FGSC A1100 / Af293) (Neosartorya fumigata), this protein is Probable dipeptidyl peptidase 4 (dpp4).